The primary structure comprises 238 residues: Aspartate/glutamate leucyltransferase (238 aa).

It belongs to the R-transferase family. Bpt subfamily.

It is found in the cytoplasm. It catalyses the reaction N-terminal L-glutamyl-[protein] + L-leucyl-tRNA(Leu) = N-terminal L-leucyl-L-glutamyl-[protein] + tRNA(Leu) + H(+). The catalysed reaction is N-terminal L-aspartyl-[protein] + L-leucyl-tRNA(Leu) = N-terminal L-leucyl-L-aspartyl-[protein] + tRNA(Leu) + H(+). Functionally, functions in the N-end rule pathway of protein degradation where it conjugates Leu from its aminoacyl-tRNA to the N-termini of proteins containing an N-terminal aspartate or glutamate. The chain is Aspartate/glutamate leucyltransferase from Nitrosococcus oceani (strain ATCC 19707 / BCRC 17464 / JCM 30415 / NCIMB 11848 / C-107).